Reading from the N-terminus, the 283-residue chain is Bifunctional protein FolD 2 (283 aa).

Residues 165-167 (GAS), serine 190, and isoleucine 231 each bind NADP(+).

Belongs to the tetrahydrofolate dehydrogenase/cyclohydrolase family. As to quaternary structure, homodimer.

It catalyses the reaction (6R)-5,10-methylene-5,6,7,8-tetrahydrofolate + NADP(+) = (6R)-5,10-methenyltetrahydrofolate + NADPH. The catalysed reaction is (6R)-5,10-methenyltetrahydrofolate + H2O = (6R)-10-formyltetrahydrofolate + H(+). The protein operates within one-carbon metabolism; tetrahydrofolate interconversion. Catalyzes the oxidation of 5,10-methylenetetrahydrofolate to 5,10-methenyltetrahydrofolate and then the hydrolysis of 5,10-methenyltetrahydrofolate to 10-formyltetrahydrofolate. In Bordetella pertussis (strain Tohama I / ATCC BAA-589 / NCTC 13251), this protein is Bifunctional protein FolD 2.